Reading from the N-terminus, the 410-residue chain is Peptidase T (410 aa).

Zn(2+) is bound at residue H77. D79 is a catalytic residue. A Zn(2+)-binding site is contributed by D140. The active-site Proton acceptor is E174. Residues E175, D197, and H379 each contribute to the Zn(2+) site.

This sequence belongs to the peptidase M20B family. Zn(2+) is required as a cofactor.

The protein localises to the cytoplasm. It catalyses the reaction Release of the N-terminal residue from a tripeptide.. Its function is as follows. Cleaves the N-terminal amino acid of tripeptides. The chain is Peptidase T from Desulfitobacterium hafniense (strain Y51).